Consider the following 543-residue polypeptide: NADH-ubiquinone oxidoreductase chain 4 (543 aa).

Transmembrane regions (helical) follow at residues 5 to 25 (FLMF…IIWS), 84 to 104 (VVAF…YILF), 129 to 149 (VDGI…IALM), 161 to 181 (SYLI…LVLD), 182 to 202 (ILLF…LIGL), 213 to 233 (FYIF…ILTM), 254 to 274 (IQIF…PTIF), 287 to 307 (PLGG…YGIF), 321 to 341 (YTYI…FSTL), 350 to 370 (IAYS…SNTI), 377 to 397 (ILLG…VGGV), 416 to 436 (MAPL…GVPL), 456 to 476 (LLGL…IFLF), and 501 to 521 (FYAL…PSII).

It belongs to the complex I subunit 4 family.

It is found in the mitochondrion membrane. It carries out the reaction a ubiquinone + NADH + 5 H(+)(in) = a ubiquinol + NAD(+) + 4 H(+)(out). Core subunit of the mitochondrial membrane respiratory chain NADH dehydrogenase (Complex I) that is believed to belong to the minimal assembly required for catalysis. Complex I functions in the transfer of electrons from NADH to the respiratory chain. The immediate electron acceptor for the enzyme is believed to be ubiquinone. In Neurospora crassa (strain ATCC 24698 / 74-OR23-1A / CBS 708.71 / DSM 1257 / FGSC 987), this protein is NADH-ubiquinone oxidoreductase chain 4 (ndh-4).